A 410-amino-acid chain; its full sequence is Putative ribosomal large subunit pseudouridine synthase SVR1, chloroplastic (410 aa).

Residues 1–35 (MASVAASSSISFAASFLKIKAFPLSPRFFPIRTLR) constitute a chloroplast transit peptide. The tract at residues 96–143 (HNLAIDATTQNPKKKDKSKKKQPQATSSSSATTTASSPASHSEVKPKL) is disordered. Positions 107–117 (PKKKDKSKKKQ) are enriched in basic residues. Residues 118-135 (PQATSSSSATTTASSPAS) show a composition bias toward low complexity. Residues 160 to 229 (QRLSKVLAAA…PKVYFALNKP (70 aa)) form the S4 RNA-binding domain. The active-site Nucleophile is Asp274.

This sequence belongs to the pseudouridine synthase RsuA family. Highly expressed in young seedlings. Expressed in roots, rosette leaves, cauline leaves, stems and flowers.

Its subcellular location is the plastid. The protein resides in the chloroplast. In terms of biological role, responsible for synthesis of pseudouridine in chloroplastic 23S ribosomal RNA. Necessary for normal chloroplast rRNA processing and translation. Required for normal chloroplast development and maintenance. May function in other plastids, such as root amyloplasts. This chain is Putative ribosomal large subunit pseudouridine synthase SVR1, chloroplastic (SVR1), found in Arabidopsis thaliana (Mouse-ear cress).